We begin with the raw amino-acid sequence, 431 residues long: Glutamate-1-semialdehyde 2,1-aminomutase (431 aa).

K265 is subject to N6-(pyridoxal phosphate)lysine.

This sequence belongs to the class-III pyridoxal-phosphate-dependent aminotransferase family. HemL subfamily. Homodimer. Requires pyridoxal 5'-phosphate as cofactor.

It localises to the cytoplasm. The enzyme catalyses (S)-4-amino-5-oxopentanoate = 5-aminolevulinate. It participates in porphyrin-containing compound metabolism; protoporphyrin-IX biosynthesis; 5-aminolevulinate from L-glutamyl-tRNA(Glu): step 2/2. This is Glutamate-1-semialdehyde 2,1-aminomutase from Vibrio parahaemolyticus serotype O3:K6 (strain RIMD 2210633).